Here is a 286-residue protein sequence, read N- to C-terminus: Plasma membrane ascorbate-dependent reductase CYBRD1 (286 aa).

Residues 1–7 are Cytoplasmic-facing; the sequence is MAMEGYW. A helical membrane pass occupies residues 8-32; that stretch reads RFLALLGSALLVGFLSVIFALVWVL. A Cytochrome b561 domain is found at 15–220; that stretch reads SALLVGFLSV…FGALIFWIVT (206 aa). Residues 33–47 lie on the Extracellular side of the membrane; that stretch reads HYREGLGWDGSALEF. Residues 48 to 69 form a helical membrane-spanning segment; it reads NWHPVLMVTGFVFIQGIAIIVY. Heme b-binding residues include histidine 50, arginine 70, and lysine 79. Residues 70-78 are Cytoplasmic-facing; that stretch reads RLPWTWKCS. Positions 79 and 83 each coordinate L-ascorbate. Residues 79 to 105 traverse the membrane as a helical segment; the sequence is KLLMKSIHAGLNAVAAILAIISVVAVF. Histidine 86 is a binding site for heme b. Residues 106-118 lie on the Extracellular side of the membrane; that stretch reads ENHNVNNIANMYS. Histidine 108 contacts Fe(3+). Heme b-binding positions include 115 to 118 and histidine 120; that span reads NMYS. The helical transmembrane segment at 119–144 threads the bilayer; the sequence is LHSWVGLIAVICYLLQLLSGFSVFLL. At 145 to 151 the chain is on the cytoplasmic side; that stretch reads PWAPLSL. L-ascorbate is bound at residue arginine 152. The chain crosses the membrane as a helical span at residues 152-179; sequence RAFLMPIHVYSGIVIFGTVIATALMGLT. Residues histidine 159 and glutamate 180 each coordinate heme b. Residues 180–197 are Extracellular-facing; the sequence is EKLIFSLRDPAYSTFPPE. A helical transmembrane segment spans residues 198-222; sequence GVFVNTLGLLILVFGALIFWIVTRP. Topologically, residues 223–286 are cytoplasmic; the sequence is QWKRPKEPNS…LDEAGQRSTM (64 aa). Lysine 225 is a heme b binding site. A disordered region spans residues 229–268; the sequence is EPNSTILHPNGGTEQGARGSMPAYSGNNMDKSDSELNSEV. Serine 232 carries the phosphoserine modification. Threonine 285 is modified (phosphothreonine).

Homodimer. It depends on heme b as a cofactor. As to expression, present in erythrocyte membranes (at protein level). Also expressed in respiratory epithelium.

Its subcellular location is the cell membrane. It localises to the apical cell membrane. The enzyme catalyses Fe(3+)(out) + L-ascorbate(in) = monodehydro-L-ascorbate radical(in) + Fe(2+)(out) + H(+). It carries out the reaction Cu(2+)(out) + L-ascorbate(in) = Cu(+)(out) + monodehydro-L-ascorbate radical(in) + H(+). It catalyses the reaction monodehydro-L-ascorbate radical(out) + L-ascorbate(in) = monodehydro-L-ascorbate radical(in) + L-ascorbate(out). With respect to regulation, activated by chelators like citrate, malate, and oxalate specially at alkaline pH. Its function is as follows. Plasma membrane reductase that uses cytoplasmic ascorbate as an electron donor to reduce extracellular Fe(3+) into Fe(2+). Probably functions in dietary iron absorption at the brush border of duodenal enterocytes by producing Fe(2+), the divalent form of iron that can be transported into enterocytes. It is also able to reduce extracellular monodehydro-L-ascorbate and may be involved in extracellular ascorbate regeneration by erythrocytes in blood. May also act as a ferrireductase in airway epithelial cells. May also function as a cupric transmembrane reductase. The sequence is that of Plasma membrane ascorbate-dependent reductase CYBRD1 from Homo sapiens (Human).